Reading from the N-terminus, the 75-residue chain is Large ribosomal subunit protein bL31 (75 aa).

This sequence belongs to the bacterial ribosomal protein bL31 family. Type A subfamily. In terms of assembly, part of the 50S ribosomal subunit.

In terms of biological role, binds the 23S rRNA. The sequence is that of Large ribosomal subunit protein bL31 from Rhodopseudomonas palustris (strain BisB18).